Consider the following 214-residue polypeptide: UPF0690 protein C1orf52 homolog (214 aa).

Disordered stretches follow at residues 1 to 66 (MSDE…SVSK) and 81 to 214 (DSRA…QCLD). Residues 32 to 44 (PEATASSAPAEPQ) are compositionally biased toward low complexity. Basic and acidic residues-rich tracts occupy residues 49-61 (RAAE…DELF) and 81-97 (DSRA…EFKV). A compositionally biased stretch (acidic residues) spans 152-165 (EEEEEEQQPDSDDD). S162 carries the post-translational modification Phosphoserine. Basic and acidic residues-rich tracts occupy residues 179–192 (VETF…KRDI) and 200–214 (NFVE…QCLD).

This sequence belongs to the UPF0690 family.

This is UPF0690 protein C1orf52 homolog from Danio rerio (Zebrafish).